Consider the following 775-residue polypeptide: Transcription activator of gluconeogenesis HCBG_00867 (775 aa).

A disordered region spans residues 1-70 (MTASTQNGSP…NAKDPLRPRR (70 aa)). Polar residues-rich tracts occupy residues 21–41 (NQESKNMTANPADASESQSPA) and 48–60 (TAESGQKHTSTAA). Positions 77–105 (CFACQRAHLTCGDERPCQRCIKRGLQDAC) form a DNA-binding region, zn(2)-C6 fungal-type. Disordered regions lie at residues 179–248 (TQAK…PFGA), 286–351 (GAGD…NIYN), 556–592 (NLNVNTGGSSPRGSGTFTPRNGNGVDPHSGMSAAGGG), and 649–725 (QGKE…SPKQ). A compositionally biased stretch (polar residues) spans 195–217 (MQDTSINPSAFQAPSPTSTPNFD). Residues 218–229 (LSSNPPNRNLSS) are compositionally biased toward low complexity. 4 stretches are compositionally biased toward polar residues: residues 230–244 (AMTQTPSSASNQTQD), 292–323 (PSDSATQRGSIGRSSGTFTAQNFGDSTNTQSP), 334–351 (WNPSGQSQTNPRNNNIYN), and 557–576 (LNVNTGGSSPRGSGTFTPRN). Over residues 657 to 668 (GSDGKGGGGGGD) the composition is skewed to gly residues. Low complexity predominate over residues 669-713 (VAATAATTSTSTSNGANSSGHANANRNNTNPKNSSPPSSSSAAAA).

The protein belongs to the ERT1/acuK family.

Its subcellular location is the nucleus. In terms of biological role, transcription factor which regulates nonfermentable carbon utilization. Activator of gluconeogenetic genes. The protein is Transcription activator of gluconeogenesis HCBG_00867 of Ajellomyces capsulatus (strain G186AR / H82 / ATCC MYA-2454 / RMSCC 2432) (Darling's disease fungus).